Here is a 183-residue protein sequence, read N- to C-terminus: Streptavidin (183 aa).

An N-terminal signal peptide occupies residues methionine 1 to alanine 24. Residues alanine 37–proline 159 enclose the Avidin-like domain. Biotin is bound by residues tyrosine 67 and tyrosine 78. A Cell attachment site; atypical motif is present at residues arginine 83–aspartate 85. Biotin-binding residues include tryptophan 116, tryptophan 132, and tryptophan 144.

It belongs to the avidin/streptavidin family. As to quaternary structure, homotetramer.

It localises to the secreted. Functionally, the biological function of streptavidin is not known. Forms a strong non-covalent specific complex with biotin (one molecule of biotin per subunit of streptavidin). The chain is Streptavidin from Streptomyces avidinii.